A 513-amino-acid chain; its full sequence is Prostaglandin E2 receptor EP4 subtype (513 aa).

Residues 1-44 (MAEVGGTIPRSNRELQRCVLLTTTIMSIPGVNASFSSTPERLNS) lie on the Extracellular side of the membrane. N-linked (GlcNAc...) asparagine glycosylation occurs at asparagine 32. The helical transmembrane segment at 45 to 68 (PVTIPAVMFIFGVVGNLVAIVVLC) threads the bilayer. Residues 69–80 (KSRKEQKETTFY) lie on the Cytoplasmic side of the membrane. Residues 81 to 104 (TLVCGLAVTDLLGTLLVSPVTIAT) form a helical membrane-spanning segment. Topologically, residues 105–121 (YMKGQWPGDQALCDYST) are extracellular. The cysteines at positions 117 and 195 are disulfide-linked. The helical transmembrane segment at 122–140 (FILLFFGLSGLSIICAMSI) threads the bilayer. The Cytoplasmic segment spans residues 141-160 (ERYLAINHAYFYSHYVDKRL). Residues 161-185 (AGLTLFAIYASNVLFCALPNMGLGR) traverse the membrane as a helical segment. Residues 186–209 (SERQYPGTWCFIDWTTNVTAYAAF) are Extracellular-facing. The chain crosses the membrane as a helical span at residues 210-236 (SYMYAGFSSFLILATVLCNVLVCGALL). The Cytoplasmic portion of the chain corresponds to 237–295 (RMHRQFMRRTSLGTEQHHAAAAAAVASVACRGHAGASPALQRLSDFRRRRSFRRIAGAE). A helical membrane pass occupies residues 296–323 (IQMVILLIATSLVVLICSIPLVVRVFIN). The Extracellular portion of the chain corresponds to 324–340 (QLYQPNVVKDISRNPDL). The chain crosses the membrane as a helical span at residues 341-360 (QAIRIASVNPILDPWIYILL). At 361–513 (RKTVLSKAIE…ETLKLSEKCI (153 aa)) the chain is on the cytoplasmic side. Residues 383-403 (GRDSSAQHCSESRRTSSAMSG) form a disordered region. Residues 384-403 (RDSSAQHCSESRRTSSAMSG) are compositionally biased toward polar residues. Serine 402, serine 405, and serine 407 each carry phosphoserine.

This sequence belongs to the G-protein coupled receptor 1 family. In terms of assembly, interacts with FEM1A. Post-translationally, phosphorylation mediates agonist-mediated desensitization by promoting cytoplasmic retention. As to expression, abundant expression in ileum, thymus and mastocytoma P-815 cells. Also observed in lung, spleen, heart and uterus.

The protein localises to the cell membrane. In terms of biological role, receptor for prostaglandin E2 (PGE2). The activity of this receptor is mediated by G(s) proteins that stimulate adenylate cyclase. Has a relaxing effect on smooth muscle. May play an important role in regulating renal hemodynamics, intestinal epithelial transport, adrenal aldosterone secretion, and uterine function. This chain is Prostaglandin E2 receptor EP4 subtype (Ptger4), found in Mus musculus (Mouse).